The sequence spans 269 residues: 5'-nucleotidase SurE (269 aa).

Residues Asp-11, Asp-12, Ser-43, and Asn-101 each coordinate a divalent metal cation.

It belongs to the SurE nucleotidase family. It depends on a divalent metal cation as a cofactor.

The protein resides in the cytoplasm. The catalysed reaction is a ribonucleoside 5'-phosphate + H2O = a ribonucleoside + phosphate. Its function is as follows. Nucleotidase that shows phosphatase activity on nucleoside 5'-monophosphates. The chain is 5'-nucleotidase SurE from Synechococcus sp. (strain CC9902).